Here is a 272-residue protein sequence, read N- to C-terminus: 2-dehydro-3-deoxyphosphooctonate aldolase (272 aa).

Belongs to the KdsA family.

It localises to the cytoplasm. It catalyses the reaction D-arabinose 5-phosphate + phosphoenolpyruvate + H2O = 3-deoxy-alpha-D-manno-2-octulosonate-8-phosphate + phosphate. It functions in the pathway carbohydrate biosynthesis; 3-deoxy-D-manno-octulosonate biosynthesis; 3-deoxy-D-manno-octulosonate from D-ribulose 5-phosphate: step 2/3. The protein operates within bacterial outer membrane biogenesis; lipopolysaccharide biosynthesis. This is 2-dehydro-3-deoxyphosphooctonate aldolase from Trichlorobacter lovleyi (strain ATCC BAA-1151 / DSM 17278 / SZ) (Geobacter lovleyi).